Reading from the N-terminus, the 509-residue chain is L-arabinose isomerase (509 aa).

Residues Glu-313, Glu-340, His-357, and His-456 each contribute to the Mn(2+) site.

The protein belongs to the arabinose isomerase family. Mn(2+) serves as cofactor.

It carries out the reaction beta-L-arabinopyranose = L-ribulose. The protein operates within carbohydrate degradation; L-arabinose degradation via L-ribulose; D-xylulose 5-phosphate from L-arabinose (bacterial route): step 1/3. In terms of biological role, catalyzes the conversion of L-arabinose to L-ribulose. This chain is L-arabinose isomerase, found in Phocaeicola vulgatus (strain ATCC 8482 / DSM 1447 / JCM 5826 / CCUG 4940 / NBRC 14291 / NCTC 11154) (Bacteroides vulgatus).